Reading from the N-terminus, the 557-residue chain is 2-isopropylmalate synthase (557 aa).

In terms of domain architecture, Pyruvate carboxyltransferase spans 33 to 307 (PLWLSTDLRD…DPGLDFSDID (275 aa)). Mg(2+) contacts are provided by aspartate 42, histidine 246, histidine 248, and asparagine 282. The interval 439-557 (AETPYALKGH…LGQQASIRAA (119 aa)) is regulatory domain.

The protein belongs to the alpha-IPM synthase/homocitrate synthase family. LeuA type 2 subfamily. In terms of assembly, homodimer. Mg(2+) is required as a cofactor.

It is found in the cytoplasm. The catalysed reaction is 3-methyl-2-oxobutanoate + acetyl-CoA + H2O = (2S)-2-isopropylmalate + CoA + H(+). It functions in the pathway amino-acid biosynthesis; L-leucine biosynthesis; L-leucine from 3-methyl-2-oxobutanoate: step 1/4. Functionally, catalyzes the condensation of the acetyl group of acetyl-CoA with 3-methyl-2-oxobutanoate (2-ketoisovalerate) to form 3-carboxy-3-hydroxy-4-methylpentanoate (2-isopropylmalate). The polypeptide is 2-isopropylmalate synthase (Azotobacter vinelandii (strain DJ / ATCC BAA-1303)).